Consider the following 335-residue polypeptide: Probable phosphoglycerate mutase ARB_03491 (335 aa).

Residues Met1–Ala24 form the signal peptide. His108 serves as the catalytic Tele-phosphohistidine intermediate. The active-site Proton donor/acceptor is Glu211.

The protein belongs to the phosphoglycerate mutase family.

The protein localises to the secreted. Functionally, probable phosphomutase that may have a function related to the manipulation of phosphate groups on carbohydrates. The chain is Probable phosphoglycerate mutase ARB_03491 from Arthroderma benhamiae (strain ATCC MYA-4681 / CBS 112371) (Trichophyton mentagrophytes).